Here is a 548-residue protein sequence, read N- to C-terminus: Chaperonin GroEL (548 aa).

ATP contacts are provided by residues 29–32, lysine 50, 86–90, glycine 414, 478–480, and aspartate 494; these read TMGP, DGTTT, and NAA.

It belongs to the chaperonin (HSP60) family. In terms of assembly, forms a cylinder of 14 subunits composed of two heptameric rings stacked back-to-back. Interacts with the co-chaperonin GroES.

Its subcellular location is the cytoplasm. The enzyme catalyses ATP + H2O + a folded polypeptide = ADP + phosphate + an unfolded polypeptide.. Its function is as follows. Together with its co-chaperonin GroES, plays an essential role in assisting protein folding. The GroEL-GroES system forms a nano-cage that allows encapsulation of the non-native substrate proteins and provides a physical environment optimized to promote and accelerate protein folding. The chain is Chaperonin GroEL from Legionella pneumophila (strain Corby).